A 440-amino-acid polypeptide reads, in one-letter code: Ribosomal protein uS12 methylthiotransferase RimO (440 aa).

One can recognise an MTTase N-terminal domain in the interval 1–117 (MKIFFISLGC…ITEVIDKVLG (117 aa)). [4Fe-4S] cluster contacts are provided by Cys-10, Cys-46, Cys-80, Cys-154, Cys-158, and Cys-161. Residues 140-370 (TTGGYYSFLK…MEIQQGIAFE (231 aa)) enclose the Radical SAM core domain. The region spanning 373–440 (ESMVGRKLKV…KEYDLIGTAE (68 aa)) is the TRAM domain.

This sequence belongs to the methylthiotransferase family. RimO subfamily. Requires [4Fe-4S] cluster as cofactor.

It is found in the cytoplasm. The enzyme catalyses L-aspartate(89)-[ribosomal protein uS12]-hydrogen + (sulfur carrier)-SH + AH2 + 2 S-adenosyl-L-methionine = 3-methylsulfanyl-L-aspartate(89)-[ribosomal protein uS12]-hydrogen + (sulfur carrier)-H + 5'-deoxyadenosine + L-methionine + A + S-adenosyl-L-homocysteine + 2 H(+). Functionally, catalyzes the methylthiolation of an aspartic acid residue of ribosomal protein uS12. The protein is Ribosomal protein uS12 methylthiotransferase RimO of Lachnoclostridium phytofermentans (strain ATCC 700394 / DSM 18823 / ISDg) (Clostridium phytofermentans).